A 481-amino-acid polypeptide reads, in one-letter code: Probable Xaa-Pro aminopeptidase PEPP (481 aa).

Asp-265, Asp-276, Glu-399, and Glu-439 together coordinate Mn(2+).

This sequence belongs to the peptidase M24B family. Mn(2+) serves as cofactor.

The catalysed reaction is Release of any N-terminal amino acid, including proline, that is linked to proline, even from a dipeptide or tripeptide.. Catalyzes the removal of a penultimate prolyl residue from the N-termini of peptides. The polypeptide is Probable Xaa-Pro aminopeptidase PEPP (PEPP) (Uncinocarpus reesii (strain UAMH 1704)).